Reading from the N-terminus, the 326-residue chain is Probable protein phosphatase 2C 61 (326 aa).

The 275-residue stretch at 42 to 316 (LGSVSSLAGG…DDISVVCLSL (275 aa)) folds into the PPM-type phosphatase domain. Aspartate 77, glycine 78, aspartate 261, and aspartate 307 together coordinate Mn(2+).

Belongs to the PP2C family. Mg(2+) is required as a cofactor. It depends on Mn(2+) as a cofactor.

It carries out the reaction O-phospho-L-seryl-[protein] + H2O = L-seryl-[protein] + phosphate. It catalyses the reaction O-phospho-L-threonyl-[protein] + H2O = L-threonyl-[protein] + phosphate. The chain is Probable protein phosphatase 2C 61 from Arabidopsis thaliana (Mouse-ear cress).